Here is a 127-residue protein sequence, read N- to C-terminus: Transcription antitermination protein NusB (127 aa).

Belongs to the NusB family.

In terms of biological role, involved in transcription antitermination. Required for transcription of ribosomal RNA (rRNA) genes. Binds specifically to the boxA antiterminator sequence of the ribosomal RNA (rrn) operons. In Lysinibacillus sphaericus (strain C3-41), this protein is Transcription antitermination protein NusB.